A 149-amino-acid chain; its full sequence is Protein FAM72C (149 aa).

Belongs to the FAM72 family.

In Homo sapiens (Human), this protein is Protein FAM72C (FAM72C).